We begin with the raw amino-acid sequence, 590 residues long: Multidrug resistance-like ATP-binding protein MdlA (590 aa).

Positions 18–303 (YLGAVALLVI…LAWMFNIVER (286 aa)) constitute an ABC transmembrane type-1 domain. 6 helical membrane passes run 23 to 43 (ALLV…GIVV), 53 to 73 (TGQI…VYLL), 134 to 154 (GVLT…MMST), 155 to 175 (QISW…AIMI), 248 to 268 (IYIA…WMVV), and 280 to 300 (FMMY…MFNI). In terms of domain architecture, ABC transporter spans 337 to 570 (VNIHQFTYPQ…SGWYRDMYRY (234 aa)). 369-376 (GPTGSGKS) provides a ligand contact to ATP.

Belongs to the ABC transporter superfamily. Drug exporter-2 (TC 3.A.1.117) family.

It localises to the cell inner membrane. It catalyses the reaction ATP + H2O + xenobioticSide 1 = ADP + phosphate + xenobioticSide 2.. The sequence is that of Multidrug resistance-like ATP-binding protein MdlA (mdlA) from Escherichia coli (strain K12).